The following is a 524-amino-acid chain: Cytochrome P450 704B1 (524 aa).

Residues serine 2–glutamine 22 traverse the membrane as a helical segment. Residue cysteine 471 participates in heme binding.

The protein belongs to the cytochrome P450 family. The cofactor is heme.

The protein localises to the membrane. The catalysed reaction is an omega-methyl-long-chain fatty acid + reduced [NADPH--hemoprotein reductase] + O2 = an omega-hydroxy-long-chain fatty acid + oxidized [NADPH--hemoprotein reductase] + H2O + H(+). Involved in pollen wall development. Catalyzes the conversion of long-chain fatty acids to the corresponding omega-hydroxylated fatty acids. Omega-hydroxylated fatty acids, together with in-chain hydroxylated fatty acids, are key monomeric aliphatic building blocks for sporopollenin synthesis during exine formation. The polypeptide is Cytochrome P450 704B1 (CYP704B1) (Arabidopsis thaliana (Mouse-ear cress)).